Reading from the N-terminus, the 204-residue chain is Endothelin-3 (204 aa).

A signal peptide spans 1-17 (MELRLWFLFGLTVTSAA). The disordered stretch occupies residues 18-71 (GPVPRPQPGDAGRSGVPRAPSATKETMAMVATRGPSPRSSGQEQEPGPFGELAA). The propeptide occupies 18–80 (GPVPRPQPGD…AKGGPVRYRA (63 aa)). 2 cysteine pairs are disulfide-bonded: C83-C97 and C85-C93. Residues 104-204 (INTPERTVPY…KSRTDKARRL (101 aa)) constitute a propeptide that is removed on maturation. The segment at 115-140 (LSNHRGSVRGRRSAGPSPQSSQPSRG) is disordered. Positions 127 to 140 (SAGPSPQSSQPSRG) are enriched in low complexity. The endothelin-like stretch occupies residues 144 to 158 (CACAESQDRACVYFC). The disordered stretch occupies residues 166–204 (GASRTPETPDKEAGKPAGRATGGLHPRRLKSRTDKARRL).

It belongs to the endothelin/sarafotoxin family.

It is found in the secreted. Endothelins are endothelium-derived vasoconstrictor peptides. The chain is Endothelin-3 (EDN3) from Sus scrofa (Pig).